The sequence spans 1031 residues: Protein draper (1031 aa).

The signal sequence occupies residues 1–16 (MLPVILIACLAQLVLA). Over 17-800 (QADLKDLDGP…DQSENSSRAS (784 aa)) the chain is Extracellular. Residues 25–100 (GPNICKRREL…YIASAGECVP (76 aa)) form the EMI domain. 6 cysteine pairs are disulfide-bonded: Cys-29-Cys-88, Cys-55-Cys-62, Cys-87-Cys-98, Cys-102-Cys-111, Cys-106-Cys-117, and Cys-119-Cys-128. An N-linked (GlcNAc...) asparagine glycan is attached at Asn-73. EGF-like domains follow at residues 99–129 (VPHCSEPCQHGRCISPEKCKCDHGYGGPACD), 137–172 (YGRNCSMQCDCLNNAVCEPFSGDCECAKGYTGARCA), 180–215 (FGANCSEKCRCENGGKCHHVSGECQCAPGFTGPLCD), 223–258 (HGAQCQQDCPCQNDGKCQPETGACMCNPGWTGDVCA), 266–301 (YGPGCQESCECYKGAPCHHITGQCECPPGYRGERCF), and 309–344 (YGFNCSMTCDCANDAMCDRANGTCICNPGWTGAKCA). An N-linked (GlcNAc...) asparagine glycan is attached at Asn-140. 3 disulfides stabilise this stretch: Cys-141–Cys-153, Cys-147–Cys-160, and Cys-162–Cys-171. The N-linked (GlcNAc...) asparagine glycan is linked to Asn-183. 9 disulfide bridges follow: Cys-184-Cys-196, Cys-190-Cys-203, Cys-205-Cys-214, Cys-227-Cys-239, Cys-233-Cys-246, Cys-248-Cys-257, Cys-270-Cys-282, Cys-276-Cys-289, and Cys-291-Cys-300. N-linked (GlcNAc...) asparagine glycosylation occurs at Asn-312. Cystine bridges form between Cys-313–Cys-325, Cys-319–Cys-332, and Cys-334–Cys-343. The N-linked (GlcNAc...) asparagine glycan is linked to Asn-329. An N-linked (GlcNAc...) asparagine glycan is attached at Asn-358. 2 EGF-like domains span residues 398-433 (YGPNCELTCNCKNGAKCSPVNGTCLCAPGWRGPTCE) and 484-519 (FGQDCAKVCDCHNNAACNPQNGSCTCAAGWTGERCE). 6 disulfides stabilise this stretch: Cys-402–Cys-414, Cys-408–Cys-421, Cys-423–Cys-432, Cys-488–Cys-500, Cys-494–Cys-507, and Cys-509–Cys-518. N-linked (GlcNAc...) asparagine glycosylation occurs at Asn-418. N-linked (GlcNAc...) asparagine glycosylation is present at Asn-504. 3 N-linked (GlcNAc...) asparagine glycosylation sites follow: Asn-540, Asn-584, and Asn-585. The EGF-like 9 domain occupies 572-607 (YGENCDKVCRCLNNSSCDPDSGNCICSAGWTGADCA). 3 disulfide bridges follow: Cys-576–Cys-588, Cys-582–Cys-595, and Cys-597–Cys-606. An N-linked (GlcNAc...) asparagine glycan is attached at Asn-630. Positions 660–695 (YGPGCKLKCNCEHGGECNHVTGQCQCLPGWTGSNCN) constitute an EGF-like 10 domain. Intrachain disulfides connect Cys-664-Cys-676, Cys-670-Cys-683, and Cys-685-Cys-694. 2 N-linked (GlcNAc...) asparagine glycosylation sites follow: Asn-695 and Asn-795. A helical transmembrane segment spans residues 801–821 (VALTLVLMTLFACIIFAVFIY). Topologically, residues 822-1031 (YRRRVSNLKT…SPSSSPKFLK (210 aa)) are cytoplasmic. A compositionally biased stretch (basic and acidic residues) spans 940–954 (KEGYKDPDEYDHLDY). Disordered regions lie at residues 940 to 964 (KEGYKDPDEYDHLDYSRPSTSQKPH) and 989 to 1031 (TVLL…KFLK). The segment covering 1009 to 1031 (DNTNTNLDNVSTASPSSSPKFLK) has biased composition (polar residues).

The protein belongs to the MEGF family. As to quaternary structure, interacts (via the cytoplasmic domain) with shark; this is required for the recruitment of drpr and glial cells to severed axons and for the phagocytosis of axonal debris by glial cells following axon injury. Interacts with ced-6. Interacts with csw; this results in dephosphorylation of drpr isoform A which is required for the inhibition of glial cell engulfment of axonal debris produced following axonal injury. Post-translationally, phosphorylated on tyrosine residues. Phosphorylation is induced by binding to prtp. It is also induced by binding to the membrane phospholipid phosphatidylserine. Phosphorylation may be mediated directly or indirectly by Src42a and is required for interaction with shark. Dephosphorylated by csw which is required for the inhibition of glial cell engulfment of axonal debris produced following axonal injury. As to expression, expressed in adult head (at protein level). Expressed in glia, macrophages and ectoderm (at protein level). Detected in glia around the mushroom body dorsal lobe and in glial processes infiltrating the medial lobe (at protein level). Expressed in adult brain glia including antennal lobe glia (at protein level). Expressed in the larval fat body (at protein level). Expressed in the ovary (at protein level). Isoform B: Predominant isoform in adult glia.

Its subcellular location is the cell membrane. It is found in the cell projection. The protein localises to the axon. The protein resides in the cytoplasm. It localises to the postsynaptic cell membrane. Its subcellular location is the cell cortex. It is found in the phagocytic cup. The protein localises to the cytoplasmic vesicle. The protein resides in the phagosome. Its function is as follows. Receptor which is involved in the phagocytosis of a variety of cells including apoptotic cells, severed and pruned axons, degenerating dendrites, salivary gland cells, germline cells and bacteria. Binds to the ligand prtp which relocates from the endoplasmic reticulum to the cell surface during apoptosis. Ligand-binding may promote tyrosine phosphorylation mediated by Src42a, interaction with shark and subsequent activation of phagocytosis. Also binds to the membrane phospholipid phosphatidylserine which is exposed on the surface of apoptotic cells. Required for the phagocytosis of apoptotic cells by macrophages. Also required for the phagocytosis of apoptotic neurons by glial cells in the embryonic nervous system. Acts downstream of NimC4/simu in the glial phagocytosis of apoptotic neurons. Plays a role in the glial engulfment of larval axons as part of programmed axon pruning during metamorphosis. Also mediates glial cell clearance of severed axons following axonal injury. Required for the engulfment of degenerating dendrites by epidermal cells. Required in the ovary for the engulfment and subsequent processing of dying germline cells by follicular epithelial cells through activation of the JNK/bsk pathway. Plays a role in neuromuscular junction development by mediating the clearance of presynaptic debris and immature boutons which are shed by growing synapses. Required for larval salivary gland cell death which occurs following a rise in steroid levels after puparium formation. Also involved in bacterial phagocytosis. Required for hemocyte phagocytosis of the Gram-positive bacterium S.aureus. Lipoteichoic acid, synthesized by the S.aureus lipoteichoic acid synthase ltaS, acts as a ligand for drpr in this process. Together with Src42a and shark, promotes the migration of macrophages to sites of wounding as part of a signaling cascade where Scr42a detects production of hydrogen peroxide at wound sites which triggers phosphorylation of drpr and subsequent recruitment and activation of shark. Also required for macrophage priming which occurs following phagocytosis of apoptotic cells and ensures that macrophages develop a form of molecular memory that allows them to later mount an inflammatory response to tissue damage and bacterial infection. Is also an essential factor in the regulation of muscle development and myogenesis, and as a consequence is required for normal locomotion. Likely to control the balance between skeletal muscle satellite cells proliferation and differentiation through regulation of the notch signaling pathway. In terms of biological role, promotes engulfment of axonal debris by glial cells following axonal injury. Functionally, potently inhibits glial cell engulfment of axonal debris produced following axonal injury. This is Protein draper from Drosophila melanogaster (Fruit fly).